Reading from the N-terminus, the 232-residue chain is Cytochrome c oxidase subunit 2 (232 aa).

The Mitochondrial intermembrane portion of the chain corresponds to 1–30 (MNNFFQDFNLLFSSSLFSSYMDWFYNFNCS). Residues 31–52 (LLFGVLSFVSTMFVYLLLSSFY) traverse the membrane as a helical segment. Over 53–69 (FKSKKIEYQFGELLCSV) the chain is Mitochondrial matrix. A helical transmembrane segment spans residues 70 to 89 (FPTLILVMQMVPSLSLLYYY). At 90-232 (GLMNLDSSLT…KSWCVGLLSD (143 aa)) the chain is on the mitochondrial intermembrane side. Cu cation is bound by residues His164, Cys199, Glu201, Cys203, His207, and Met210. Position 201 (Glu201) interacts with Mg(2+).

The protein belongs to the cytochrome c oxidase subunit 2 family. In terms of assembly, component of the cytochrome c oxidase (complex IV, CIV), a multisubunit enzyme composed of a catalytic core of 3 subunits and several supernumerary subunits. The complex exists as a monomer or a dimer and forms supercomplexes (SCs) in the inner mitochondrial membrane with ubiquinol-cytochrome c oxidoreductase (cytochrome b-c1 complex, complex III, CIII). Cu cation serves as cofactor.

It is found in the mitochondrion inner membrane. The catalysed reaction is 4 Fe(II)-[cytochrome c] + O2 + 8 H(+)(in) = 4 Fe(III)-[cytochrome c] + 2 H2O + 4 H(+)(out). In terms of biological role, component of the cytochrome c oxidase, the last enzyme in the mitochondrial electron transport chain which drives oxidative phosphorylation. The respiratory chain contains 3 multisubunit complexes succinate dehydrogenase (complex II, CII), ubiquinol-cytochrome c oxidoreductase (cytochrome b-c1 complex, complex III, CIII) and cytochrome c oxidase (complex IV, CIV), that cooperate to transfer electrons derived from NADH and succinate to molecular oxygen, creating an electrochemical gradient over the inner membrane that drives transmembrane transport and the ATP synthase. Cytochrome c oxidase is the component of the respiratory chain that catalyzes the reduction of oxygen to water. Electrons originating from reduced cytochrome c in the intermembrane space (IMS) are transferred via the dinuclear copper A center (CU(A)) of subunit 2 and heme A of subunit 1 to the active site in subunit 1, a binuclear center (BNC) formed by heme A3 and copper B (CU(B)). The BNC reduces molecular oxygen to 2 water molecules using 4 electrons from cytochrome c in the IMS and 4 protons from the mitochondrial matrix. The polypeptide is Cytochrome c oxidase subunit 2 (COII) (Ascaris suum (Pig roundworm)).